The primary structure comprises 28 residues: N-acetyl-D-galactosamine-binding lectin subunit A (28 aa).

It belongs to the ribosome-inactivating protein family. In terms of assembly, disulfide-linked heterodimer of A and B chains.

It carries out the reaction Endohydrolysis of the N-glycosidic bond at one specific adenosine on the 28S rRNA.. Gal / GalNAc-specific lectin. Agglutinates both native and trypsin-treated rabbit erythrocytes but not human erythrocytes irrespective of blood group type. The chain is N-acetyl-D-galactosamine-binding lectin subunit A from Iris hollandica (Dutch iris).